The chain runs to 76 residues: Exodeoxyribonuclease 7 small subunit (76 aa).

The protein belongs to the XseB family. In terms of assembly, heterooligomer composed of large and small subunits.

It localises to the cytoplasm. It carries out the reaction Exonucleolytic cleavage in either 5'- to 3'- or 3'- to 5'-direction to yield nucleoside 5'-phosphates.. In terms of biological role, bidirectionally degrades single-stranded DNA into large acid-insoluble oligonucleotides, which are then degraded further into small acid-soluble oligonucleotides. The protein is Exodeoxyribonuclease 7 small subunit of Legionella pneumophila subsp. pneumophila (strain Philadelphia 1 / ATCC 33152 / DSM 7513).